The following is a 376-amino-acid chain: tRNA-specific 2-thiouridylase MnmA (376 aa).

ATP is bound by residues 14–21 (GMSGGVDS) and Met-40. The segment at 100–102 (NPD) is interaction with target base in tRNA. Cys-105 (nucleophile) is an active-site residue. A disulfide bridge links Cys-105 with Cys-202. Residue Gly-129 coordinates ATP. The interaction with tRNA stretch occupies residues 152-154 (KDQ). The Cysteine persulfide intermediate role is filled by Cys-202. Residues 315–316 (RY) form an interaction with tRNA region.

The protein belongs to the MnmA/TRMU family.

Its subcellular location is the cytoplasm. The enzyme catalyses S-sulfanyl-L-cysteinyl-[protein] + uridine(34) in tRNA + AH2 + ATP = 2-thiouridine(34) in tRNA + L-cysteinyl-[protein] + A + AMP + diphosphate + H(+). Its function is as follows. Catalyzes the 2-thiolation of uridine at the wobble position (U34) of tRNA, leading to the formation of s(2)U34. This chain is tRNA-specific 2-thiouridylase MnmA, found in Lactococcus lactis subsp. cremoris (strain MG1363).